We begin with the raw amino-acid sequence, 640 residues long: 1-deoxy-D-xylulose-5-phosphate synthase (640 aa).

Thiamine diphosphate is bound by residues H78 and 119 to 121; that span reads GHS. Residue D151 participates in Mg(2+) binding. Thiamine diphosphate contacts are provided by residues 152 to 153, N180, Y289, and E371; that span reads GA. N180 contacts Mg(2+).

Belongs to the transketolase family. DXPS subfamily. As to quaternary structure, homodimer. Requires Mg(2+) as cofactor. It depends on thiamine diphosphate as a cofactor.

The enzyme catalyses D-glyceraldehyde 3-phosphate + pyruvate + H(+) = 1-deoxy-D-xylulose 5-phosphate + CO2. It participates in metabolic intermediate biosynthesis; 1-deoxy-D-xylulose 5-phosphate biosynthesis; 1-deoxy-D-xylulose 5-phosphate from D-glyceraldehyde 3-phosphate and pyruvate: step 1/1. Its function is as follows. Catalyzes the acyloin condensation reaction between C atoms 2 and 3 of pyruvate and glyceraldehyde 3-phosphate to yield 1-deoxy-D-xylulose-5-phosphate (DXP). This Bartonella henselae (strain ATCC 49882 / DSM 28221 / CCUG 30454 / Houston 1) (Rochalimaea henselae) protein is 1-deoxy-D-xylulose-5-phosphate synthase.